We begin with the raw amino-acid sequence, 610 residues long: Replication factor C large subunit (610 aa).

55-62 (GPAGIGKT) contributes to the ATP binding site. 3 stretches are compositionally biased toward basic and acidic residues: residues 467 to 478 (EKEGNASAEKPE), 502 to 515 (LPEKKRSSEMKLPE), and 594 to 603 (DGSKKAEPKN). The disordered stretch occupies residues 467–610 (EKEGNASAEK…PKNQKTLFDF (144 aa)).

The protein belongs to the activator 1 small subunits family. RfcL subfamily. In terms of assembly, heteromultimer composed of small subunits (RfcS) and large subunits (RfcL).

In terms of biological role, part of the RFC clamp loader complex which loads the PCNA sliding clamp onto DNA. In Methanosarcina mazei (strain ATCC BAA-159 / DSM 3647 / Goe1 / Go1 / JCM 11833 / OCM 88) (Methanosarcina frisia), this protein is Replication factor C large subunit.